The following is a 564-amino-acid chain: Eukaryotic translation initiation factor 3 subunit L (564 aa).

Ser-2 bears the N-acetylserine mark. At Ser-21 the chain carries Phosphoserine. The 207-residue stretch at 331–537 (DAIRVFANIL…IHIADTKVAR (207 aa)) folds into the PCI domain. Residues Lys-465 and Lys-549 each carry the N6-acetyllysine modification.

As to quaternary structure, component of the eukaryotic translation initiation factor 3 (eIF-3) complex, which is composed of 13 subunits: EIF3A, EIF3B, EIF3C, EIF3D, EIF3E, EIF3F, EIF3G, EIF3H, EIF3I, EIF3J, EIF3K, EIF3L and EIF3M. The eIF-3 complex appears to include 3 stable modules: module A is composed of EIF3A, EIF3B, EIF3G and EIF3I; module B is composed of EIF3F, EIF3H, and EIF3M; and module C is composed of EIF3C, EIF3D, EIF3E, EIF3K and EIF3L. EIF3C of module C binds EIF3B of module A and EIF3H of module B, thereby linking the three modules. EIF3J is a labile subunit that binds to the eIF-3 complex via EIF3B. The eIF-3 complex interacts with RPS6KB1 under conditions of nutrient depletion. Mitogenic stimulation leads to binding and activation of a complex composed of MTOR and RPTOR, leading to phosphorylation and release of RPS6KB1 and binding of EIF4B to eIF-3. Interacts with RRN3.

The protein localises to the cytoplasm. Its function is as follows. Component of the eukaryotic translation initiation factor 3 (eIF-3) complex, which is required for several steps in the initiation of protein synthesis. The eIF-3 complex associates with the 40S ribosome and facilitates the recruitment of eIF-1, eIF-1A, eIF-2:GTP:methionyl-tRNAi and eIF-5 to form the 43S pre-initiation complex (43S PIC). The eIF-3 complex stimulates mRNA recruitment to the 43S PIC and scanning of the mRNA for AUG recognition. The eIF-3 complex is also required for disassembly and recycling of post-termination ribosomal complexes and subsequently prevents premature joining of the 40S and 60S ribosomal subunits prior to initiation. The eIF-3 complex specifically targets and initiates translation of a subset of mRNAs involved in cell proliferation, including cell cycling, differentiation and apoptosis, and uses different modes of RNA stem-loop binding to exert either translational activation or repression. In terms of biological role, (Microbial infection) In case of FCV infection, plays a role in the ribosomal termination-reinitiation event leading to the translation of VP2. The sequence is that of Eukaryotic translation initiation factor 3 subunit L from Homo sapiens (Human).